The sequence spans 4363 residues: AM-toxin synthetase AMT1 (4363 aa).

The interval 278 to 670 (AGQAKQRPHA…GSLLYVGRKD (393 aa)) is adenylation 1. Residues 810–887 (APDSVIARQL…ALAAIAKVIP (78 aa)) enclose the Carrier 1 domain. At S847 the chain carries O-(pantetheine 4'-phosphoryl)serine. Residues 926-1340 (EDVYACTPLQ…TLGQIDVLTS (415 aa)) form a condensation 1 region. Positions 1368–1765 (KQARTRPGAI…LGRKDTQIKI (398 aa)) are adenylation 2. Positions 1884–1961 (PPVTDMEKHV…DQARHVTLLT (78 aa)) constitute a Carrier 2 domain. Residue S1922 is modified to O-(pantetheine 4'-phosphoryl)serine. The interval 1999–2410 (EDVYPCTPLQ…ASPSSSTLVS (412 aa)) is condensation 2. Positions 2448–2853 (RKKALAAPQA…GRKDNQVKIR (406 aa)) are adenylation 3. Residues 2977 to 3053 (LPSTVMEETL…DLAACCTDRR (77 aa)) form the Carrier 3 domain. S3014 carries the post-translational modification O-(pantetheine 4'-phosphoryl)serine. Residues 3098-3503 (VEDVYPCTPM…ELVSSIETLN (406 aa)) form a condensation 3 region. Residues 3730 to 3806 (PAVTAMQLAI…SLAVRATENT (77 aa)) form the Carrier 4 domain. Residue S3767 is modified to O-(pantetheine 4'-phosphoryl)serine. The segment at 3850–4204 (QDVLPCTSMQ…GLDEIVEHYA (355 aa)) is condensation 4.

It belongs to the NRP synthetase family.

Its pathway is mycotoxin biosynthesis. In terms of biological role, nonribosomal peptide synthetase; part of the gene clusters that mediate the biosynthesis of AM-toxins, host-selective toxins (HSTs) causing Alternaria blotch on apple, a worldwide distributed disease. AM-toxins are cyclic depsipeptides containing the 3 residues 2-hydroxy-isovaleric acid (2-HIV), dehydroalanine, L-alanine which are common for all 3 AM-toxins I to III. The fourth precursor is L-alpha-amino-methoxyphenyl-valeric acid (L-Amv) for AM-toxin I, L-alpha-amino-phenyl-valeric acid (L-Apv) for AM-toxin II, and L-alpha-amino-hydroxyphenyl-valeric acid (L-Ahv) for AM-toxin III. AM-toxins have two target sites for affecting susceptible apple cells; they cause invagination of the plasma membrane and electrolyte loss, and chloroplast disorganization. The non-ribosomal peptide synthetase AMT1 contains 4 catalytic modules and is responsible for activation of each residue in AM-toxin. The aldo-keto reductase AMT2 catalyzes the conversion of 2-keto-isovaleric acid (2-KIV) to 2-hydroxy-isovaleric acid (2-HIV), one of the precursor residues incorporated by AMT1 during AM-toxin biosynthesis, by reduction of its ketone to an alcohol. The cytochrome P450 monooxygenase AMT3 and the thioesterase AMT4 are also important for AM-toxin production, but their exact function within the AM-toxin biosynthesis are not known yet. Up to 21 proteins (including AMT1 to AMT4) are predicted to be involved in AM-toxin biosynthesis since their expression ishighly up-regulated in AM-toxin-producing cultures. The sequence is that of AM-toxin synthetase AMT1 from Alternaria alternata (Alternaria rot fungus).